The primary structure comprises 419 residues: Protein indeterminate-domain 14 (419 aa).

The tract at residues Met-1–Ser-58 is disordered. 3 C2H2-type zinc fingers span residues Tyr-70–His-92, Tyr-112–His-142, and Trp-148–His-175. Zn(2+) contacts are provided by Cys-150, Cys-153, His-166, Cys-170, Cys-177, Cys-179, His-192, and Cys-196. The segment at His-175–Val-198 adopts a CCHC-type 2; atypical zinc-finger fold. Residues Arg-185–Thr-197 are SHR-binding. Disordered stretches follow at residues Arg-200–Leu-259 and Ser-298–Arg-318. Composition is skewed to low complexity over residues Gln-213–Asn-230 and Arg-246–Leu-259. Residues Glu-313 to Ala-349 adopt a coiled-coil conformation.

In terms of assembly, homo- and heterodimer of IDD14alpha and IDD14beta. In terms of tissue distribution, expressed in cotyledons and the vasculature of reosette leaves. Weak expression in hypocotyls and floral organs, but not detected in roots and inflorescence stems.

Its subcellular location is the nucleus. Its function is as follows. Transcription factor regulating starch metabolism by binding directly to the promoter of QQS. The IDD14beta isoform attenuates the transcription factor activity by competitively forming heterodimers with reduced DNA-binding capacity. Regulates lateral organ morphogenesis and gravitropic responses. Has a redundant role with IDD16 in directing leaf and floral organ morphogenesis. Involved in the establishment of auxin gradients through the regulation of auxin biosynthesis and transport. This Arabidopsis thaliana (Mouse-ear cress) protein is Protein indeterminate-domain 14.